The sequence spans 285 residues: Probable adenylate kinase 6, chloroplastic (285 aa).

The transit peptide at Met1–Arg33 directs the protein to the chloroplast. Gly63–Thr68 lines the ATP pocket. An NMP region spans residues Ala83–Val112. AMP-binding positions include Thr84, Arg89, Lys110–Val112, Gly140–Arg143, and Gln147. Residues Gly176–Asp224 are LID. ATP-binding positions include Arg177 and Asn186–Phe187. AMP-binding residues include Arg221 and Arg232.

It belongs to the adenylate kinase family.

It localises to the plastid. It is found in the chloroplast. The enzyme catalyses AMP + ATP = 2 ADP. Functionally, catalyzes the reversible transfer of the terminal phosphate group between ATP and AMP. Plays an important role in cellular energy homeostasis and in adenine nucleotide metabolism. In Oryza sativa subsp. japonica (Rice), this protein is Probable adenylate kinase 6, chloroplastic.